Here is a 357-residue protein sequence, read N- to C-terminus: Holliday junction branch migration complex subunit RuvB (357 aa).

The tract at residues 3-193 is large ATPase domain (RuvB-L); the sequence is WDDTTDAEAA…FGFTAHMEFY (191 aa). Residues L32, R33, G74, K77, T78, T79, 140–142, R183, Y193, and R230 each bind ATP; that span reads EDF. T78 is a Mg(2+) binding site. The tract at residues 194 to 264 is small ATPAse domain (RuvB-S); it reads GPAELERVIH…IAAAALAVYE (71 aa). Residues 267–357 form a head domain (RuvB-H) region; the sequence is ARGLDRLDRG…GNGQPDLFGA (91 aa). DNA-binding residues include R303, R322, and R327. The tract at residues 337–357 is disordered; it reads LGLTPPRPQSSGNGQPDLFGA.

This sequence belongs to the RuvB family. Homohexamer. Forms an RuvA(8)-RuvB(12)-Holliday junction (HJ) complex. HJ DNA is sandwiched between 2 RuvA tetramers; dsDNA enters through RuvA and exits via RuvB. An RuvB hexamer assembles on each DNA strand where it exits the tetramer. Each RuvB hexamer is contacted by two RuvA subunits (via domain III) on 2 adjacent RuvB subunits; this complex drives branch migration. In the full resolvosome a probable DNA-RuvA(4)-RuvB(12)-RuvC(2) complex forms which resolves the HJ.

The protein resides in the cytoplasm. It carries out the reaction ATP + H2O = ADP + phosphate + H(+). Functionally, the RuvA-RuvB-RuvC complex processes Holliday junction (HJ) DNA during genetic recombination and DNA repair, while the RuvA-RuvB complex plays an important role in the rescue of blocked DNA replication forks via replication fork reversal (RFR). RuvA specifically binds to HJ cruciform DNA, conferring on it an open structure. The RuvB hexamer acts as an ATP-dependent pump, pulling dsDNA into and through the RuvAB complex. RuvB forms 2 homohexamers on either side of HJ DNA bound by 1 or 2 RuvA tetramers; 4 subunits per hexamer contact DNA at a time. Coordinated motions by a converter formed by DNA-disengaged RuvB subunits stimulates ATP hydrolysis and nucleotide exchange. Immobilization of the converter enables RuvB to convert the ATP-contained energy into a lever motion, pulling 2 nucleotides of DNA out of the RuvA tetramer per ATP hydrolyzed, thus driving DNA branch migration. The RuvB motors rotate together with the DNA substrate, which together with the progressing nucleotide cycle form the mechanistic basis for DNA recombination by continuous HJ branch migration. Branch migration allows RuvC to scan DNA until it finds its consensus sequence, where it cleaves and resolves cruciform DNA. This Streptomyces coelicolor (strain ATCC BAA-471 / A3(2) / M145) protein is Holliday junction branch migration complex subunit RuvB.